We begin with the raw amino-acid sequence, 119 residues long: Thioredoxin H4 (119 aa).

The 114-residue stretch at 2–115 (AAEEGQVIGC…LQAKIVKHTG (114 aa)) folds into the Thioredoxin domain. Catalysis depends on nucleophile residues cysteine 40 and cysteine 43. A disulfide bond links cysteine 40 and cysteine 43.

The protein belongs to the thioredoxin family. Plant H-type subfamily. In terms of assembly, interacts with MDH1.

The protein resides in the cytoplasm. Its function is as follows. Thiol-disulfide oxidoreductase probably involved in the redox regulation of a number of cytosolic enzymes. Possesses insulin disulfide bonds reducing activity. The protein is Thioredoxin H4 (TRX4) of Arabidopsis thaliana (Mouse-ear cress).